The sequence spans 204 residues: MKLTVILLTAVLAASASPAPVDVDARAPVALDSRSPIDIDSRSADALANRAAPPQSEIDQWLKAHNNERAQHGAVALVWNQTLSDKAADWASQCIWEHSNSGQNLAAWFSPQANKPMNISQGVGGWNAEEPDYNTTTYSGAGHWTQVVWKSTTSVGCAAYSCPPGTLGRKPTDPWKTLWYYVCNYYRPGNVSPRDKYYPINVQP.

The N-terminal stretch at 1–16 is a signal peptide; the sequence is MKLTVILLTAVLAASA. Positions 62–185 constitute an SCP domain; the sequence is LKAHNNERAQ…KTLWYYVCNY (124 aa). Residues asparagine 80, asparagine 118, and asparagine 134 are each glycosylated (N-linked (GlcNAc...) asparagine).

The protein belongs to the CRISP family.

Its subcellular location is the secreted. This Schizophyllum commune (Split gill fungus) protein is Fruiting body protein SC7 (SC7).